The sequence spans 731 residues: Anaphase-promoting complex subunit 2 (731 aa).

This sequence belongs to the cullin family. In terms of assembly, the APC/C is probably composed of at least 12 subunits: apc-2, apc-10, apc-11, cdc-26, emb-1, emb-27, emb-30, mat-1, mat-2, mat-3, such-1 and gfi-3.

It participates in protein modification; protein ubiquitination. Probable component of the anaphase promoting complex/cyclosome (APC/C), a cell cycle-regulated ubiquitin ligase that controls progression through mitosis and the G1 phase of the cell cycle. The APC/C complex acts by mediating ubiquitination and subsequent degradation of target proteins. Developmental role in early embryogenesis and the metaphase to anaphase transition in meiosis and mitosis. The polypeptide is Anaphase-promoting complex subunit 2 (Caenorhabditis elegans).